A 507-amino-acid polypeptide reads, in one-letter code: Lysine--tRNA ligase (507 aa).

Positions 416 and 423 each coordinate Mg(2+).

The protein belongs to the class-II aminoacyl-tRNA synthetase family. Homodimer. It depends on Mg(2+) as a cofactor.

The protein localises to the cytoplasm. It carries out the reaction tRNA(Lys) + L-lysine + ATP = L-lysyl-tRNA(Lys) + AMP + diphosphate. The polypeptide is Lysine--tRNA ligase (Hahella chejuensis (strain KCTC 2396)).